A 450-amino-acid polypeptide reads, in one-letter code: Protein tweety homolog 1 (450 aa).

At M1 to A43 the chain is on the extracellular side. A helical membrane pass occupies residues L44–V64. Residues Y65–G88 lie on the Cytoplasmic side of the membrane. A helical membrane pass occupies residues C89–F109. At Y110–W214 the chain is on the extracellular side. N-linked (GlcNAc...) asparagine glycosylation occurs at N130. Residues L215–L235 traverse the membrane as a helical segment. Residues A236 to K240 are Cytoplasmic-facing. A helical transmembrane segment spans residues W241–M261. The Extracellular portion of the chain corresponds to G262 to E390. N-linked (GlcNAc...) asparagine glycans are attached at residues N284 and N355. C303 and C370 are disulfide-bonded. Residues G391–C411 form a helical membrane-spanning segment. At S412–I450 the chain is on the cytoplasmic side. A disordered region spans residues D428–I450. S440 carries the phosphoserine modification.

It belongs to the tweety family. As to quaternary structure, homotetramer; disulfide-linked. Homodimer. In terms of processing, N-glycosylated. Contains high-mannose, hybrid and complex oligosaccharides.

The protein resides in the cell membrane. The enzyme catalyses chloride(in) = chloride(out). It catalyses the reaction L-glutamate(out) = L-glutamate(in). Calcium-independent, swelling-dependent volume-regulated anion channel (VRAC-swell) which plays a pivotal role in the process of regulatory volume decrease (RVD) in the brain through the efflux of anions like chloride and organic osmolytes like glutamate. The protein is Protein tweety homolog 1 (TTYH1) of Macaca fascicularis (Crab-eating macaque).